We begin with the raw amino-acid sequence, 508 residues long: Ribonuclease Y (508 aa).

A helical membrane pass occupies residues 2–22 (IITALIAIAVGFLIGYLARKI). The 64-residue stretch at 198-261 (TVSVVTLPND…EVARIALEKL (64 aa)) folds into the KH domain. The 94-residue stretch at 324-417 (VLKHSIEVAH…VQAADAISAA (94 aa)) folds into the HD domain.

The protein belongs to the RNase Y family.

The protein localises to the cell membrane. In terms of biological role, endoribonuclease that initiates mRNA decay. The chain is Ribonuclease Y from Thermoanaerobacter pseudethanolicus (strain ATCC 33223 / 39E) (Clostridium thermohydrosulfuricum).